Here is a 661-residue protein sequence, read N- to C-terminus: Peroxisomal acyl-coenzyme A oxidase 1 (661 aa).

At Ser26 the chain carries Phosphoserine. Lys65 carries the post-translational modification N6-acetyllysine. N6-succinyllysine is present on residues Lys89 and Lys90. Position 139 (Thr139) interacts with FAD. Position 159 is an N6-succinyllysine (Lys159). Gly178 lines the FAD pocket. N6-acetyllysine is present on Lys216. The residue at position 241 (Lys241) is an N6-succinyllysine. Residues Lys255, Lys267, and Lys272 each carry the N6-acetyllysine modification. The residue at position 349 (Lys349) is an N6-succinyllysine. The active-site Proton acceptor is the Glu421. An N6-acetyllysine; alternate mark is found at Lys437 and Lys446. Residues Lys437 and Lys446 each carry the N6-succinyllysine; alternate modification. Lys500 carries the N6-acetyllysine modification. Lys512 carries the post-translational modification N6-acetyllysine; alternate. Lys512 carries the post-translational modification N6-succinyllysine; alternate. Position 542 is an N6-succinyllysine (Lys542). Lys637 is modified (N6-acetyllysine; alternate). Position 637 is an N6-succinyllysine; alternate (Lys637). The residue at position 643 (Lys643) is an N6-succinyllysine. Ser649 carries the phosphoserine modification. At Lys652 the chain carries N6-acetyllysine. Position 655 is an N6-succinyllysine (Lys655). Positions 659-661 (SKL) match the Microbody targeting signal motif.

Belongs to the acyl-CoA oxidase family. Homodimer. The enzyme contains three components A, B and C, the latter two being produced from the first by a proteolytic cleavage. Interacts with LONP2. It depends on FAD as a cofactor. As to expression, expressed in Schwann cells. Expressed (at protein level) in liver.

Its subcellular location is the peroxisome. The enzyme catalyses a 2,3-saturated acyl-CoA + O2 = a (2E)-enoyl-CoA + H2O2. It carries out the reaction hexadecanoyl-CoA + O2 = (2E)-hexadecenoyl-CoA + H2O2. It catalyses the reaction dodecanoyl-CoA + O2 = (2E)-dodecenoyl-CoA + H2O2. The catalysed reaction is octanoyl-CoA + O2 = (2E)-octenoyl-CoA + H2O2. The enzyme catalyses decanoyl-CoA + O2 = (2E)-decenoyl-CoA + H2O2. It carries out the reaction tetradecanoyl-CoA + O2 = (2E)-tetradecenoyl-CoA + H2O2. It catalyses the reaction hexadecanedioyl-CoA + O2 = (2E)-hexadecenedioyl-CoA + H2O2. The catalysed reaction is tetracosanoyl-CoA + O2 = (2E)-tetracosenoyl-CoA + H2O2. The enzyme catalyses glutaryl-CoA + O2 = (2E)-glutaconyl-CoA + H2O2. It carries out the reaction hexanoyl-CoA + O2 = (2E)-hexenoyl-CoA + H2O2. It catalyses the reaction octadecanoyl-CoA + O2 = (2E)-octadecenoyl-CoA + H2O2. The catalysed reaction is (5Z,8Z,11Z,14Z,17Z)-eicosapentaenoyl-CoA + O2 = (2E,5Z,8Z,11Z,14Z,17Z)-icosahexaenoyl-CoA + H2O2. The enzyme catalyses (6Z,9Z,12Z,15Z,18Z,21Z)-tetracosahexaenoyl-CoA + O2 = (2E,6Z,9Z,12Z,15Z,18Z,21Z)-tetracosaheptaenoyl-CoA + H2O2. Its pathway is lipid metabolism; peroxisomal fatty acid beta-oxidation. Functionally, involved in the initial and rate-limiting step of peroxisomal beta-oxidation of straight-chain saturated and unsaturated very-long-chain fatty acids. Catalyzes the desaturation of fatty acyl-CoAs such as palmitoyl-CoA (hexadecanoyl-CoA) to 2-trans-enoyl-CoAs ((2E)-enoyl-CoAs) such as (2E)-hexadecenoyl-CoA, and donates electrons directly to molecular oxygen (O(2)), thereby producing hydrogen peroxide (H(2)O(2)). Its function is as follows. Shows highest activity against medium-chain fatty acyl-CoAs. Shows optimum activity with a chain length of 10 carbons (decanoyl-CoA) in vitro. Is active against a much broader range of substrates and shows activity towards long-chain acyl-CoAs. This chain is Peroxisomal acyl-coenzyme A oxidase 1, found in Rattus norvegicus (Rat).